The primary structure comprises 528 residues: Importin subunit alpha-7 (528 aa).

An IBB domain is found at 1-56 (MKGGETMSVRRSGYKAVVDGVGGRRRREDDMVEIRKAKREESLLKKRREALPHSPS). 8 ARM repeats span residues 93 to 133 (NVRV…NIAS), 136 to 175 (SENTEVVIDHGAVAILVRLLNSPYDVVREQVVWALGNISG), 178 to 218 (PRCR…NLCR), 220 to 259 (KPQPPFDQVSAALPALAQLIRLDDKELLAYTCWALVYLSD), 262 to 301 (NEKIQAVIEANVCARLIGLSIHRSPSVITPALRTIGNIVT), 304 to 344 (DSQT…NITA), 347 to 386 (QSQIQAVFDADICPALVNLLQNSEGDVKKEAAWAICNAIA), and 390 to 429 (YKQIMFLVKQECIKPLCDLLTCSDTQLVMVCLEALKKILK).

It belongs to the importin alpha family. In terms of assembly, forms a complex with importin subunit beta-1.

It localises to the nucleus envelope. Binds to conventional NLS motifs and mediates nuclear protein import across the nuclear envelope. Acts as a cellular receptor for the nuclear import of the virD2 protein of Agrobacterium, but is not essential for Agrobacterium-mediated root transformation. The sequence is that of Importin subunit alpha-7 from Arabidopsis thaliana (Mouse-ear cress).